An 82-amino-acid polypeptide reads, in one-letter code: Small ribosomal subunit protein bS16 (82 aa).

The protein belongs to the bacterial ribosomal protein bS16 family.

The polypeptide is Small ribosomal subunit protein bS16 (Francisella philomiragia subsp. philomiragia (strain ATCC 25017 / CCUG 19701 / FSC 153 / O#319-036)).